The following is a 558-amino-acid chain: Formate--tetrahydrofolate ligase (558 aa).

An ATP-binding site is contributed by 65-72; that stretch reads TPAGEGKT.

The protein belongs to the formate--tetrahydrofolate ligase family.

It catalyses the reaction (6S)-5,6,7,8-tetrahydrofolate + formate + ATP = (6R)-10-formyltetrahydrofolate + ADP + phosphate. The protein operates within one-carbon metabolism; tetrahydrofolate interconversion. The chain is Formate--tetrahydrofolate ligase from Methylobacterium sp. (strain 4-46).